The sequence spans 341 residues: Protein huluwa (341 aa).

The Extracellular portion of the chain corresponds to 1 to 36; the sequence is MVTLSPAYLPSDGGTQAASAAPSVEENWVVQPSLTL. The helical transmembrane segment at 37–57 threads the bilayer; sequence LVLLLVPCVLLLFFLNCFLLF. At 58–341 the chain is on the cytoplasmic side; that stretch reads HRLPAFSLRK…PMMCSKQYWI (284 aa). A VPPNSP motif motif is present at residues 206–211; sequence VPPNTP.

This sequence belongs to the huluwa family. Interacts with axin1; leading to promote the tankyrase-mediated degradation of axin. Interacts with axin2; leading to promote the tankyrase-mediated degradation of axin.

It is found in the cell membrane. Functionally, key maternal determinant of the dorsal organizer and body axis formation in vertebrates that acts by promoting stabilization of beta-catenin (ctnnb1). Localizes on the plasma membrane of the future dorsal blastomeres in early blastulas and binds to and promotes the tankyrase-mediated degradation of axin (axin1 and axin2). Axin degradation results in stabilization and nuclear translocation of beta-catenin (ctnnb1) for activating organizer-specific target gene expression. The polypeptide is Protein huluwa (Xenopus laevis (African clawed frog)).